The sequence spans 255 residues: MVDPVAALCNFNVLEVIFSYLDLNDLSRCSQVCRSWHHFLNDENSDVWRWHCLHKLPKEAMKSDLLTSVSTYKTKLRAYFHAWSPNDCSRNVYIKPNGFTLHRNPVAQSTDAARAKIGFRHGRHAWEVIWEGPLGTVAVIGISTKDAALQCHGYVALLGSDDQSWGWNLVENHLLHNGDMQGSYPLLSNAPKYQVGERIRVILDCDDNTLSFEKNYEFLGVAFRGLPDKKLYPTVSAVYGNTEVSMVYLGTPLDG.

One can recognise an F-box domain in the interval aspartate 3–histidine 51. Residues methionine 61 to leucine 253 enclose the B30.2/SPRY domain.

This sequence belongs to the FBXO45/Fsn family. As to quaternary structure, component of an E3 ubiquitin ligase complex composed of hiw and Fsn.

It is found in the synapse. It functions in the pathway protein modification; protein ubiquitination. Functionally, required in the presynaptic motoneuron to down-regulate the levels of wnd and restrain synaptic terminal growth at the neuromuscular junction (NMJ). The chain is F-box/SPRY domain-containing protein 1 from Drosophila willistoni (Fruit fly).